The chain runs to 28 residues: uncharacterized protein (28 aa).

This is an uncharacterized protein from Escherichia coli (Bacteriophage T4).